Consider the following 493-residue polypeptide: Lysine--tRNA ligase (493 aa).

Mg(2+)-binding residues include glutamate 406 and glutamate 413.

Belongs to the class-II aminoacyl-tRNA synthetase family. In terms of assembly, homodimer. Requires Mg(2+) as cofactor.

It localises to the cytoplasm. The catalysed reaction is tRNA(Lys) + L-lysine + ATP = L-lysyl-tRNA(Lys) + AMP + diphosphate. The sequence is that of Lysine--tRNA ligase from Leuconostoc citreum (strain KM20).